We begin with the raw amino-acid sequence, 687 residues long: Guanine-nucleotide exchange factor YEL1 (687 aa).

Residues 57 to 264 (ILQNKEAAND…SEYYKTLNET (208 aa)) enclose the SEC7 domain. The disordered stretch occupies residues 63-97 (AANDEKPVIPTTDTATAGTGTEDISSTQSEETDQN). Over residues 73–83 (TTDTATAGTGT) the composition is skewed to low complexity. Thr-290 bears the Phosphothreonine mark. 2 positions are modified to phosphoserine: Ser-293 and Ser-299. In terms of domain architecture, PH spans 412 to 551 (TSRRTSLSYL…DCINFWAGRI (140 aa)).

Belongs to the YEL1 family.

It localises to the cytoplasm. It is found in the cell membrane. The protein localises to the bud neck. Its subcellular location is the bud tip. Functionally, guanine nucleotide exchange factor for ARF3 required for localization of ARF3 to the bud neck and tip and involved in actin patch polarization. This is Guanine-nucleotide exchange factor YEL1 (YEL1) from Saccharomyces cerevisiae (strain JAY291) (Baker's yeast).